Consider the following 386-residue polypeptide: Succinate--CoA ligase [ADP-forming] subunit beta (386 aa).

Residues 9–244 (KELLRDYGVP…LNEEDEKEIE (236 aa)) enclose the ATP-grasp domain. ATP-binding positions include Lys46, 53–55 (GRG), Glu99, Cys102, and Glu107. Asn199 and Asp213 together coordinate Mg(2+). Substrate contacts are provided by residues Asn264 and 321–323 (GIM).

It belongs to the succinate/malate CoA ligase beta subunit family. In terms of assembly, heterotetramer of two alpha and two beta subunits. It depends on Mg(2+) as a cofactor.

The enzyme catalyses succinate + ATP + CoA = succinyl-CoA + ADP + phosphate. It carries out the reaction GTP + succinate + CoA = succinyl-CoA + GDP + phosphate. The protein operates within carbohydrate metabolism; tricarboxylic acid cycle; succinate from succinyl-CoA (ligase route): step 1/1. Functionally, succinyl-CoA synthetase functions in the citric acid cycle (TCA), coupling the hydrolysis of succinyl-CoA to the synthesis of either ATP or GTP and thus represents the only step of substrate-level phosphorylation in the TCA. The beta subunit provides nucleotide specificity of the enzyme and binds the substrate succinate, while the binding sites for coenzyme A and phosphate are found in the alpha subunit. This is Succinate--CoA ligase [ADP-forming] subunit beta from Alkaliphilus oremlandii (strain OhILAs) (Clostridium oremlandii (strain OhILAs)).